The chain runs to 208 residues: MSVFEIKHPLVQHKISLMRAKDMSTRSFRQLSAEVGSLLTYEATKDLELENFQMEGWDGEITGQRLVGKKATVVPILRAGIGMLDGVLELMPSAKISVVGLYRDEETLEPVTYFEKLAGDIDQRLALIIDPMLATGGSMNATIDILKKAGCNDIRALVLVAAPEGIEKVKSAHPDVDIYTASIDDHLNESGYIIPGLGDAGDKIFGTK.

5-phospho-alpha-D-ribose 1-diphosphate-binding positions include Arg78, Arg103, and 130 to 138 (DPMLATGGS). Uracil-binding positions include Ile193 and 198–200 (GDA). Residue Asp199 participates in 5-phospho-alpha-D-ribose 1-diphosphate binding.

It belongs to the UPRTase family. The cofactor is Mg(2+).

It carries out the reaction UMP + diphosphate = 5-phospho-alpha-D-ribose 1-diphosphate + uracil. The protein operates within pyrimidine metabolism; UMP biosynthesis via salvage pathway; UMP from uracil: step 1/1. With respect to regulation, allosterically activated by GTP. Catalyzes the conversion of uracil and 5-phospho-alpha-D-ribose 1-diphosphate (PRPP) to UMP and diphosphate. This Colwellia psychrerythraea (strain 34H / ATCC BAA-681) (Vibrio psychroerythus) protein is Uracil phosphoribosyltransferase.